Here is a 185-residue protein sequence, read N- to C-terminus: Elongation factor P (185 aa).

This sequence belongs to the elongation factor P family.

It localises to the cytoplasm. It participates in protein biosynthesis; polypeptide chain elongation. In terms of biological role, involved in peptide bond synthesis. Stimulates efficient translation and peptide-bond synthesis on native or reconstituted 70S ribosomes in vitro. Probably functions indirectly by altering the affinity of the ribosome for aminoacyl-tRNA, thus increasing their reactivity as acceptors for peptidyl transferase. This chain is Elongation factor P, found in Acetivibrio thermocellus (strain ATCC 27405 / DSM 1237 / JCM 9322 / NBRC 103400 / NCIMB 10682 / NRRL B-4536 / VPI 7372) (Clostridium thermocellum).